Reading from the N-terminus, the 569-residue chain is Urease subunit alpha (569 aa).

The Urease domain occupies 131 to 569 (GGVDAHIHFI…VAMAQRYFLF (439 aa)). The Ni(2+) site is built by histidine 136, histidine 138, and lysine 219. N6-carboxylysine is present on lysine 219. Histidine 221 is a binding site for substrate. The Ni(2+) site is built by histidine 248 and histidine 274. Residue histidine 322 is the Proton donor of the active site. Residue aspartate 362 participates in Ni(2+) binding.

It belongs to the metallo-dependent hydrolases superfamily. Urease alpha subunit family. In terms of assembly, heterotrimer of UreA (gamma), UreB (beta) and UreC (alpha) subunits. Three heterotrimers associate to form the active enzyme. Ni cation serves as cofactor. Post-translationally, carboxylation allows a single lysine to coordinate two nickel ions.

It is found in the cytoplasm. The catalysed reaction is urea + 2 H2O + H(+) = hydrogencarbonate + 2 NH4(+). It participates in nitrogen metabolism; urea degradation; CO(2) and NH(3) from urea (urease route): step 1/1. In Geobacillus kaustophilus (strain HTA426), this protein is Urease subunit alpha.